Consider the following 217-residue polypeptide: Adenylate kinase (217 aa).

ATP is bound at residue 10–15; the sequence is GAGKGT. The segment at 30-59 is NMP; the sequence is STGDMLRAQVKAGTALGLEAKKHMDAGGLV. Residues Thr31, Arg36, 57–59, 85–88, and Gln92 each bind AMP; these read GLV and GFPR. The segment at 122-159 is LID; the sequence is GRRAHLASGRTYHVKFNPPKVEGIDDVTGEPLVQRDDD. ATP-binding positions include Arg123 and 132–133; that span reads TY. Residues Arg156 and Arg167 each coordinate AMP. ATP is bound at residue Gly203.

It belongs to the adenylate kinase family. As to quaternary structure, monomer.

It is found in the cytoplasm. The catalysed reaction is AMP + ATP = 2 ADP. The protein operates within purine metabolism; AMP biosynthesis via salvage pathway; AMP from ADP: step 1/1. Catalyzes the reversible transfer of the terminal phosphate group between ATP and AMP. Plays an important role in cellular energy homeostasis and in adenine nucleotide metabolism. This Dechloromonas aromatica (strain RCB) protein is Adenylate kinase.